The following is a 410-amino-acid chain: Argininosuccinate synthase (410 aa).

8–16 (AYSGGLDTS) contributes to the ATP binding site. Tyr86 contributes to the L-citrulline binding site. Gly116 provides a ligand contact to ATP. L-aspartate contacts are provided by Thr118, Asn122, and Asp123. Asn122 contacts L-citrulline. Positions 126, 174, 259, and 271 each coordinate L-citrulline.

This sequence belongs to the argininosuccinate synthase family. Type 1 subfamily. As to quaternary structure, homotetramer.

It localises to the cytoplasm. It carries out the reaction L-citrulline + L-aspartate + ATP = 2-(N(omega)-L-arginino)succinate + AMP + diphosphate + H(+). Its pathway is amino-acid biosynthesis; L-arginine biosynthesis; L-arginine from L-ornithine and carbamoyl phosphate: step 2/3. The chain is Argininosuccinate synthase from Leuconostoc citreum (strain KM20).